We begin with the raw amino-acid sequence, 125 residues long: Interleukin-6 (125 aa).

The cysteines at positions 16 and 26 are disulfide-linked.

It belongs to the IL-6 superfamily. In terms of assembly, component of a hexamer of two molecules each of IL6, IL6R and IL6ST; first binds to IL6R to associate with the signaling subunit IL6ST. Interacts with IL6R (via the N-terminal ectodomain); this interaction may be affected by IL6R-binding with SORL1, hence decreasing IL6 cis signaling. Interacts with SORL1 (via the N-terminal ectodomain); this interaction leads to IL6 internalization and lysosomal degradation. May form a trimeric complex with the soluble SORL1 ectodomain and soluble IL6R receptor; this interaction might stabilize circulating IL6, hence promoting IL6 trans signaling.

The protein resides in the secreted. Its function is as follows. Cytokine with a wide variety of biological functions in immunity, tissue regeneration, and metabolism. Binds to IL6R, then the complex associates to the signaling subunit IL6ST/gp130 to trigger the intracellular IL6-signaling pathway. The interaction with the membrane-bound IL6R and IL6ST stimulates 'classic signaling', whereas the binding of IL6 and soluble IL6R to IL6ST stimulates 'trans-signaling'. Alternatively, 'cluster signaling' occurs when membrane-bound IL6:IL6R complexes on transmitter cells activate IL6ST receptors on neighboring receiver cells. Functionally, IL6 is a potent inducer of the acute phase response. Rapid production of IL6 contributes to host defense during infection and tissue injury, but excessive IL6 synthesis is involved in disease pathology. In the innate immune response, is synthesized by myeloid cells, such as macrophages and dendritic cells, upon recognition of pathogens through toll-like receptors (TLRs) at the site of infection or tissue injury. In the adaptive immune response, is required for the differentiation of B cells into immunoglobulin-secreting cells. Plays a major role in the differentiation of CD4(+) T cell subsets. Essential factor for the development of T follicular helper (Tfh) cells that are required for the induction of germinal-center formation. Required to drive naive CD4(+) T cells to the Th17 lineage. Also required for proliferation of myeloma cells and the survival of plasmablast cells. Acts as an essential factor in bone homeostasis and on vessels directly or indirectly by induction of VEGF, resulting in increased angiogenesis activity and vascular permeability. Induces, through 'trans-signaling' and synergistically with IL1B and TNF, the production of VEGF. Involved in metabolic controls, is discharged into the bloodstream after muscle contraction increasing lipolysis and improving insulin resistance. 'Trans-signaling' in central nervous system also regulates energy and glucose homeostasis. Mediates, through GLP-1, crosstalk between insulin-sensitive tissues, intestinal L cells and pancreatic islets to adapt to changes in insulin demand. Also acts as a myokine. Plays a protective role during liver injury, being required for maintenance of tissue regeneration. Also has a pivotal role in iron metabolism by regulating HAMP/hepcidin expression upon inflammation or bacterial infection. Through activation of IL6ST-YAP-NOTCH pathway, induces inflammation-induced epithelial regeneration. The sequence is that of Interleukin-6 (IL6) from Neovison vison (American mink).